The primary structure comprises 119 residues: Large ribosomal subunit protein bL20 (119 aa).

It belongs to the bacterial ribosomal protein bL20 family.

Its function is as follows. Binds directly to 23S ribosomal RNA and is necessary for the in vitro assembly process of the 50S ribosomal subunit. It is not involved in the protein synthesizing functions of that subunit. The sequence is that of Large ribosomal subunit protein bL20 (rplT) from Geobacillus stearothermophilus (Bacillus stearothermophilus).